Consider the following 31-residue polypeptide: Cytochrome b6-f complex subunit 6 (31 aa).

A helical membrane pass occupies residues 5–25; sequence ISYLGILVGALLFVTITFLTL.

The protein belongs to the PetL family. The 4 large subunits of the cytochrome b6-f complex are cytochrome b6, subunit IV (17 kDa polypeptide, PetD), cytochrome f and the Rieske protein, while the 4 small subunits are PetG, PetL, PetM and PetN. The complex functions as a dimer.

The protein resides in the plastid. It is found in the chloroplast thylakoid membrane. In terms of biological role, component of the cytochrome b6-f complex, which mediates electron transfer between photosystem II (PSII) and photosystem I (PSI), cyclic electron flow around PSI, and state transitions. PetL is important for photoautotrophic growth as well as for electron transfer efficiency and stability of the cytochrome b6-f complex. In Chlorokybus atmophyticus (Soil alga), this protein is Cytochrome b6-f complex subunit 6.